The primary structure comprises 374 residues: Probable neutral protease 2 homolog ARB_00849 (374 aa).

A signal peptide spans Met1–Ala19. The propeptide occupies Ala20–Arg189. Cystine bridges form between Cys197–Cys268 and Cys275–Cys293. A Zn(2+)-binding site is contributed by His318. Glu319 is a catalytic residue. Zn(2+)-binding residues include His322 and Asp333.

The protein belongs to the peptidase M35 family. Requires Zn(2+) as cofactor.

The protein localises to the secreted. It carries out the reaction Preferential cleavage of bonds with hydrophobic residues in P1'. Also 3-Asn-|-Gln-4 and 8-Gly-|-Ser-9 bonds in insulin B chain.. Probable secreted metalloprotease that shows high activities on basic nuclear substrates such as histone and protamine. May be involved in virulence. In Arthroderma benhamiae (strain ATCC MYA-4681 / CBS 112371) (Trichophyton mentagrophytes), this protein is Probable neutral protease 2 homolog ARB_00849.